The chain runs to 86 residues: uncharacterized protein (86 aa).

The disordered stretch occupies residues Met-1–Glu-21. The span at Arg-8–Lys-17 shows a compositional bias: basic residues.

This is an uncharacterized protein from Acidianus convivator (ATV).